Here is a 612-residue protein sequence, read N- to C-terminus: Protein cereblon (612 aa).

Positions 1 to 11 (MDDEETAEIED) are enriched in acidic residues. Disordered stretches follow at residues 1-30 (MDDEETAEIEDVNVLVPATGGEGPVDGASA), 58-133 (MELI…NPHP), and 181-211 (QERRRSRTSEEGEASSEPPHTPPPPRSPYDV). Low complexity predominate over residues 69 to 81 (AADAPDAAASTGS). Residues 181-190 (QERRRSRTSE) are compositionally biased toward basic and acidic residues. A Lon N-terminal domain is found at 250 to 478 (HMLIFLHQHI…IIGSTLKDES (229 aa)). Positions 477-586 (ESVFYCRYCN…LAGSSVRIGK (110 aa)) constitute a CULT domain. The Zn(2+) site is built by Cys-482, Cys-485, Cys-551, and Cys-554.

This sequence belongs to the CRBN family. In terms of assembly, likely a component of a DCX (DDB1-CUL4-X-box) protein ligase complex. May interact with pic/DDB1. In terms of processing, ubiquitinated.

Its subcellular location is the nucleus. It participates in protein modification; protein ubiquitination. Its function is as follows. Substrate recognition component of a DCX (DDB1-CUL4-X-box) E3 protein ligase complex that mediates the ubiquitination and subsequent proteasomal degradation of target proteins. Has an essential role in mediating growth by negatively regulating insulin signaling. It also has a role in maintaining presynaptic function in the neuromuscular junction synapses of third-instar larvae. The polypeptide is Protein cereblon (Drosophila willistoni (Fruit fly)).